We begin with the raw amino-acid sequence, 57 residues long: UPF0337 protein SCO0678 (57 aa).

2 stretches are compositionally biased toward basic and acidic residues: residues 1–22 and 42–57; these read MAGN…KEAA and GDAR…VFRH. Positions 1-57 are disordered; that stretch reads MAGNEKSRAKMEQAKGKAKEAAGRAVGNERMTAEGRAAQSKGDARQAKEKGKDVFRH.

Belongs to the UPF0337 (CsbD) family.

The sequence is that of UPF0337 protein SCO0678 from Streptomyces coelicolor (strain ATCC BAA-471 / A3(2) / M145).